The following is a 746-amino-acid chain: Polyribonucleotide nucleotidyltransferase (746 aa).

Positions 519 and 525 each coordinate Mg(2+). In terms of domain architecture, KH spans 585 to 644 (PRVIAVKIPVDKIGEVIGPKGKMINQIQEDTGADISIEDDGTVYIGATNGPSADAARSAI). One can recognise an S1 motif domain in the interval 656-728 (GERYLGTVVK…DRGKLSLSPV (73 aa)).

Belongs to the polyribonucleotide nucleotidyltransferase family. Requires Mg(2+) as cofactor.

It localises to the cytoplasm. It carries out the reaction RNA(n+1) + phosphate = RNA(n) + a ribonucleoside 5'-diphosphate. Functionally, involved in mRNA degradation. Catalyzes the phosphorolysis of single-stranded polyribonucleotides processively in the 3'- to 5'-direction. The chain is Polyribonucleotide nucleotidyltransferase from Arthrobacter sp. (strain FB24).